The chain runs to 38 residues: Large ribosomal subunit protein bL36 (38 aa).

The protein belongs to the bacterial ribosomal protein bL36 family.

The polypeptide is Large ribosomal subunit protein bL36 (Thermotoga maritima (strain ATCC 43589 / DSM 3109 / JCM 10099 / NBRC 100826 / MSB8)).